The chain runs to 85 residues: ATP synthase subunit c (85 aa).

Helical transmembrane passes span 10 to 30 (IAVALLIGLGALGTAIGFGLL) and 53 to 73 (FIVAGLLDAVTMIGVGIALFF).

It belongs to the ATPase C chain family. F-type ATPases have 2 components, F(1) - the catalytic core - and F(0) - the membrane proton channel. F(1) has five subunits: alpha(3), beta(3), gamma(1), delta(1), epsilon(1). F(0) has three main subunits: a(1), b(2) and c(10-14). The alpha and beta chains form an alternating ring which encloses part of the gamma chain. F(1) is attached to F(0) by a central stalk formed by the gamma and epsilon chains, while a peripheral stalk is formed by the delta and b chains.

Its subcellular location is the cell inner membrane. In terms of biological role, f(1)F(0) ATP synthase produces ATP from ADP in the presence of a proton or sodium gradient. F-type ATPases consist of two structural domains, F(1) containing the extramembraneous catalytic core and F(0) containing the membrane proton channel, linked together by a central stalk and a peripheral stalk. During catalysis, ATP synthesis in the catalytic domain of F(1) is coupled via a rotary mechanism of the central stalk subunits to proton translocation. Key component of the F(0) channel; it plays a direct role in translocation across the membrane. A homomeric c-ring of between 10-14 subunits forms the central stalk rotor element with the F(1) delta and epsilon subunits. The polypeptide is ATP synthase subunit c (Pseudomonas aeruginosa (strain LESB58)).